Here is a 176-residue protein sequence, read N- to C-terminus: ATP-dependent protease subunit HslV (176 aa).

Thr2 is an active-site residue. Na(+) is bound by residues Gly157, Cys160, and Thr163.

Belongs to the peptidase T1B family. HslV subfamily. A double ring-shaped homohexamer of HslV is capped on each side by a ring-shaped HslU homohexamer. The assembly of the HslU/HslV complex is dependent on binding of ATP.

The protein resides in the cytoplasm. The catalysed reaction is ATP-dependent cleavage of peptide bonds with broad specificity.. With respect to regulation, allosterically activated by HslU binding. Functionally, protease subunit of a proteasome-like degradation complex believed to be a general protein degrading machinery. The protein is ATP-dependent protease subunit HslV of Pseudomonas savastanoi pv. phaseolicola (strain 1448A / Race 6) (Pseudomonas syringae pv. phaseolicola (strain 1448A / Race 6)).